The chain runs to 110 residues: Nucleoid-associated protein KPK_4227 (110 aa).

The interval 1–22 (MFGGKGGLGNLMKQAQQMQDKM) is disordered.

The protein belongs to the YbaB/EbfC family. Homodimer.

It is found in the cytoplasm. Its subcellular location is the nucleoid. In terms of biological role, binds to DNA and alters its conformation. May be involved in regulation of gene expression, nucleoid organization and DNA protection. The chain is Nucleoid-associated protein KPK_4227 from Klebsiella pneumoniae (strain 342).